A 374-amino-acid polypeptide reads, in one-letter code: Carbamoyl phosphate synthase small chain (374 aa).

Positions M1–D185 are CPSase. Residues S45, G237, and G239 each coordinate L-glutamine. Residues R189 to K374 form the Glutamine amidotransferase type-1 domain. Catalysis depends on C264, which acts as the Nucleophile. L-glutamine contacts are provided by L265, Q268, N306, G308, and F309. Active-site residues include H347 and E349.

Belongs to the CarA family. Composed of two chains; the small (or glutamine) chain promotes the hydrolysis of glutamine to ammonia, which is used by the large (or ammonia) chain to synthesize carbamoyl phosphate. Tetramer of heterodimers (alpha,beta)4.

It catalyses the reaction hydrogencarbonate + L-glutamine + 2 ATP + H2O = carbamoyl phosphate + L-glutamate + 2 ADP + phosphate + 2 H(+). It carries out the reaction L-glutamine + H2O = L-glutamate + NH4(+). The protein operates within amino-acid biosynthesis; L-arginine biosynthesis; carbamoyl phosphate from bicarbonate: step 1/1. It functions in the pathway pyrimidine metabolism; UMP biosynthesis via de novo pathway; (S)-dihydroorotate from bicarbonate: step 1/3. Its function is as follows. Small subunit of the glutamine-dependent carbamoyl phosphate synthetase (CPSase). CPSase catalyzes the formation of carbamoyl phosphate from the ammonia moiety of glutamine, carbonate, and phosphate donated by ATP, constituting the first step of 2 biosynthetic pathways, one leading to arginine and/or urea and the other to pyrimidine nucleotides. The small subunit (glutamine amidotransferase) binds and cleaves glutamine to supply the large subunit with the substrate ammonia. The sequence is that of Carbamoyl phosphate synthase small chain from Maridesulfovibrio salexigens (strain ATCC 14822 / DSM 2638 / NCIMB 8403 / VKM B-1763) (Desulfovibrio salexigens).